A 269-amino-acid polypeptide reads, in one-letter code: Uncharacterised methyltransferase MT1546 (269 aa).

The protein belongs to the methyltransferase superfamily.

In Mycobacterium tuberculosis (strain CDC 1551 / Oshkosh), this protein is Uncharacterised methyltransferase MT1546.